The sequence spans 393 residues: Dual specificity mitogen-activated protein kinase kinase 1 (393 aa).

The interval 1 to 26 (MPKKKPTPIQLNPTPDGSAVNGTSSA) is disordered. Residues 9–26 (IQLNPTPDGSAVNGTSSA) are compositionally biased toward polar residues. The Protein kinase domain maps to 68–361 (FEKISELGAG…LKQLLVHAFI (294 aa)). Residues 74 to 82 (LGAGNGGVV) and Lys97 each bind ATP. The Proton acceptor role is filled by Asp190. A phosphoserine; by RAF mark is found at Ser218 and Ser222. The RAF1-binding stretch occupies residues 270–307 (ELELLFGCQVEGDAAETPPRPRTPGRPLSSYGMDSRPP). Residue Thr286 is modified to Phosphothreonine. A Phosphothreonine; by MAPK1 modification is found at Thr292. Position 298 is a phosphoserine; by PAK (Ser298).

This sequence belongs to the protein kinase superfamily. STE Ser/Thr protein kinase family. MAP kinase kinase subfamily. As to quaternary structure, found in a complex with at least BRAF, HRAS, MAP2K1, MAPK3/ERK1 and RGS14. Forms a heterodimer with MAP2K2/MEK2. Forms heterodimers with KSR2 which further dimerize to form tetramers. Interacts with KSR1 or KSR2 and BRAF; the interaction with KSR1 or KSR2 mediates KSR1-BRAF or KSR2-BRAF dimerization. Interacts with ARBB2, LAMTOR3, MAPK1/ERK2 and RAF1. Interacts with MAPK1/ERK2. Interacts with MORG1. Interacts with PPARG. Interacts with isoform 1 of VRK2. Interacts with SGK1. Interacts with BIRC6/bruce. Interacts with KAT7; the interaction promotes KAT7 phosphorylation. Interacts with RAF1 and NEK10; the interaction is required for ERK1/2-signaling pathway activation in response to UV irradiation. Interacts with TRAF3IP3. Interacts with MOS. Phosphorylation at Ser-218 and Ser-222 by MAP kinase kinase kinases (BRAF or MEKK1) positively regulates the kinase activity. Also phosphorylated at Thr-292 by MAPK1/ERK2 and at Ser-298 by PAK. MAPK1/ERK2 phosphorylation of Thr-292 occurs in response to cellular adhesion and leads to inhibition of Ser-298 phosphorylation by PAK. Autophosphorylated at Ser-218 and Ser-222, autophosphosphorylation is promoted by NEK10 following UV irradiation.

It is found in the cytoplasm. Its subcellular location is the cytoskeleton. The protein localises to the microtubule organizing center. The protein resides in the centrosome. It localises to the spindle pole body. It is found in the nucleus. Its subcellular location is the membrane. It catalyses the reaction L-seryl-[protein] + ATP = O-phospho-L-seryl-[protein] + ADP + H(+). The catalysed reaction is L-threonyl-[protein] + ATP = O-phospho-L-threonyl-[protein] + ADP + H(+). The enzyme catalyses L-tyrosyl-[protein] + ATP = O-phospho-L-tyrosyl-[protein] + ADP + H(+). With respect to regulation, ras proteins such as HRAS mediate the activation of RAF proteins such as RAF1 or BRAF which in turn activate extracellular signal-regulated kinases (ERK) through MAPK (mitogen-activated protein kinases) and ERK kinases MAP2K1/MEK1 and MAP2K2/MEK2. Activation occurs through phosphorylation of Ser-218 and Ser-222. MAP2K1/MEK1 binds KSR1 or KSR2 releasing the inhibitory intramolecular interaction between KSR1 or KSR2 protein kinase and N-terminal domains. This allows KSR1 or KSR2 dimerization with BRAF leading to BRAF activation and phosphorylation of MAP2K1. MAP2K1/MEK1 is also the target of negative feed-back regulation by its substrate kinases, such as MAPK1/ERK2. These phosphorylate MAP2K1/MEK1 on Thr-292, thereby facilitating dephosphorylation of the activating residues Ser-218 and Ser-222. Inhibited by serine/threonine phosphatase 2A. Dual specificity protein kinase which acts as an essential component of the MAP kinase signal transduction pathway. Binding of extracellular ligands such as growth factors, cytokines and hormones to their cell-surface receptors activates RAS and this initiates RAF1 activation. RAF1 then further activates the dual-specificity protein kinases MAP2K1/MEK1 and MAP2K2/MEK2. Both MAP2K1/MEK1 and MAP2K2/MEK2 function specifically in the MAPK/ERK cascade, and catalyze the concomitant phosphorylation of a threonine and a tyrosine residue in a Thr-Glu-Tyr sequence located in the extracellular signal-regulated kinases MAPK3/ERK1 and MAPK1/ERK2, leading to their activation and further transduction of the signal within the MAPK/ERK cascade. Activates BRAF in a KSR1 or KSR2-dependent manner; by binding to KSR1 or KSR2 releases the inhibitory intramolecular interaction between KSR1 or KSR2 protein kinase and N-terminal domains which promotes KSR1 or KSR2-BRAF dimerization and BRAF activation. Depending on the cellular context, this pathway mediates diverse biological functions such as cell growth, adhesion, survival and differentiation, predominantly through the regulation of transcription, metabolism and cytoskeletal rearrangements. One target of the MAPK/ERK cascade is peroxisome proliferator-activated receptor gamma (PPARG), a nuclear receptor that promotes differentiation and apoptosis. MAP2K1/MEK1 has been shown to export PPARG from the nucleus. The MAPK/ERK cascade is also involved in the regulation of endosomal dynamics, including lysosome processing and endosome cycling through the perinuclear recycling compartment (PNRC), as well as in the fragmentation of the Golgi apparatus during mitosis. This Cricetulus griseus (Chinese hamster) protein is Dual specificity mitogen-activated protein kinase kinase 1 (MAP2K1).